The following is a 221-amino-acid chain: UPF0758 protein YicR (221 aa).

An MPN domain is found at alanine 99 to isoleucine 221. Residues histidine 170, histidine 172, and aspartate 183 each contribute to the Zn(2+) site. The JAMM motif signature appears at histidine 170 to aspartate 183.

Belongs to the UPF0758 family. YicR subfamily.

The chain is UPF0758 protein YicR from Salmonella paratyphi A (strain ATCC 9150 / SARB42).